The following is a 617-amino-acid chain: Protein fem-1 homolog C (617 aa).

Met-1 is modified (N-acetylmethionine). ANK repeat units follow at residues 2 to 31 (DLKT…KEEV), 40 to 70 (NGAT…SIEV), 82 to 111 (EGAP…SVNN), 115 to 144 (TNST…DLEV), 148 to 177 (HGHT…DVNR), 181 to 210 (KGNT…KMEK), and 213 to 242 (YGMT…TSKT). 2 TPR repeats span residues 245 to 279 (INAL…RYSD) and 338 to 371 (SYYI…QQNN). ANK repeat units follow at residues 481 to 523 (NNFS…DVNV) and 527 to 556 (DDNS…HFDA).

Belongs to the fem-1 family. In terms of assembly, component of a CRL2 E3 ubiquitin-protein ligase complex, also named ECS (Elongin BC-CUL2/5-SOCS-box protein) complex, composed of CUL2, Elongin BC (ELOB and ELOC), RBX1 and substrate-specific adapter FEM1C.

It participates in protein modification; protein ubiquitination. In terms of biological role, substrate-recognition component of a Cul2-RING (CRL2) E3 ubiquitin-protein ligase complex of the DesCEND (destruction via C-end degrons) pathway, which recognizes a C-degron located at the extreme C terminus of target proteins, leading to their ubiquitination and degradation. The C-degron recognized by the DesCEND pathway is usually a motif of less than ten residues and can be present in full-length proteins, truncated proteins or proteolytically cleaved forms. The CRL2(FEM1C) complex specifically recognizes proteins with an arginine at the C-terminus: recognizes and binds proteins ending with -Lys/Arg-Xaa-Arg and -Lys/Arg-Xaa-Xaa-Arg C-degrons, such as SIL1 or OR51B2, leading to their ubiquitination and degradation. The CRL2(FEM1C) complex mediates ubiquitination and degradation of truncated MSRB1/SEPX1 selenoproteins produced by failed UGA/Sec decoding. The chain is Protein fem-1 homolog C from Bos taurus (Bovine).